The sequence spans 308 residues: Elongation factor Ts (308 aa).

Positions 80–83 are involved in Mg(2+) ion dislocation from EF-Tu; that stretch reads TDFV.

It belongs to the EF-Ts family.

It is found in the cytoplasm. In terms of biological role, associates with the EF-Tu.GDP complex and induces the exchange of GDP to GTP. It remains bound to the aminoacyl-tRNA.EF-Tu.GTP complex up to the GTP hydrolysis stage on the ribosome. In Methylobacterium radiotolerans (strain ATCC 27329 / DSM 1819 / JCM 2831 / NBRC 15690 / NCIMB 10815 / 0-1), this protein is Elongation factor Ts.